A 352-amino-acid chain; its full sequence is Phosphate acyltransferase (352 aa).

The protein belongs to the PlsX family. Homodimer. Probably interacts with PlsY.

The protein localises to the cytoplasm. It catalyses the reaction a fatty acyl-[ACP] + phosphate = an acyl phosphate + holo-[ACP]. It functions in the pathway lipid metabolism; phospholipid metabolism. Its function is as follows. Catalyzes the reversible formation of acyl-phosphate (acyl-PO(4)) from acyl-[acyl-carrier-protein] (acyl-ACP). This enzyme utilizes acyl-ACP as fatty acyl donor, but not acyl-CoA. The polypeptide is Phosphate acyltransferase (Brucella anthropi (strain ATCC 49188 / DSM 6882 / CCUG 24695 / JCM 21032 / LMG 3331 / NBRC 15819 / NCTC 12168 / Alc 37) (Ochrobactrum anthropi)).